The following is a 238-amino-acid chain: MGRKWANIVAKKTAKDGANSKVYAKFGVEIYVAAKKGDPDPESNSALKFVIDRAKQAQVPKHIIDKAIDKAKGNTDETFTEGRYEGFGPNGSMLIVDTLTSNVNRTAANVRAAFGKNGGNMGASGSVSYLFDNKGVIVFGGEDADAVFEQLLEADVDVDDVEAQEGTITVYTAPTDLHKAIVALRESGIEEFQVTELEMIPQSEVELSGEALETFEKLYSVLEDDEDVQKIYTNVDGF.

Belongs to the TACO1 family. YeeN subfamily.

The protein localises to the cytoplasm. In Streptococcus pneumoniae (strain Hungary19A-6), this protein is Probable transcriptional regulatory protein SPH_2064.